The primary structure comprises 919 residues: Calcium-transporting ATPase type 2C member 1 (919 aa).

Residues 1 to 70 (MKVARFQKIP…NEFDISEDEP (70 aa)) lie on the Cytoplasmic side of the membrane. The helical transmembrane segment at 71–91 (LWKKYISQFKNPLIMLLLASA) threads the bilayer. At 92 to 104 (VISVLMHQFDDAV) the chain is on the lumenal side. A helical transmembrane segment spans residues 105-123 (SITVAILIVVTVAFVQEYR). Topologically, residues 124 to 262 (SEKSLEELSK…APKTPLQKSM (139 aa)) are cytoplasmic. The helical transmembrane segment at 263–282 (DLLGKQLSFYSFGIIGIIML) threads the bilayer. The Lumenal portion of the chain corresponds to 283-294 (VGWLLGKDILEM). The chain crosses the membrane as a helical span at residues 295 to 312 (FTISVSLAVAAIPEGLPI). The Ca(2+) site is built by Val-303, Ala-304, Ile-306, and Glu-308. The Cytoplasmic segment spans residues 313 to 699 (VVTVTLALGV…EEGKGIYNNI (387 aa)). The active-site 4-aspartylphosphate intermediate is the Asp-350. Positions 644 and 648 each coordinate Mg(2+). A helical transmembrane segment spans residues 700 to 719 (KNFVRFQLSTSIAALTLISL). The Lumenal portion of the chain corresponds to 720 to 729 (ATLMNFPNPL). The helical transmembrane segment at 730–750 (NAMQILWINIIMDGPPAQSLG) threads the bilayer. Ca(2+) contacts are provided by Asn-738 and Asp-742. Over 751 to 770 (VEPVDKDVIRKPPRNWKDSI) the chain is Cytoplasmic. Residues 771 to 793 (LTKNLILKILVSSIIIVCGTLFV) traverse the membrane as a helical segment. Over 794–808 (FWRELRDNVITPRDT) the chain is Lumenal. The chain crosses the membrane as a helical span at residues 809–828 (TMTFTCFVFFDMFNALSSRS). The Cytoplasmic segment spans residues 829-841 (QTKSVFEIGLCSN). A helical membrane pass occupies residues 842–860 (RMFCYAVLGSIMGQLLVIY). Over 861-875 (FPPLQKVFQTESLSI) the chain is Lumenal. Residues 876 to 896 (LDLLFLLGLTSSVCIVAEIIK) form a helical membrane-spanning segment. Topologically, residues 897-919 (KVERSREKIQKHVSSTSSSFLEV) are cytoplasmic.

The protein belongs to the cation transport ATPase (P-type) (TC 3.A.3) family. Type IIA subfamily. As to quaternary structure, monomer. Homodimer. Found in most tissues except colon, thymus, spleen and leukocytes. Expressed in keratinocytes (at protein level).

Its subcellular location is the golgi apparatus. It is found in the trans-Golgi network membrane. The protein localises to the golgi stack membrane. The enzyme catalyses Ca(2+)(in) + ATP + H2O = Ca(2+)(out) + ADP + phosphate + H(+). It carries out the reaction Mn(2+)(in) + ATP + H2O = Mn(2+)(out) + ADP + phosphate + H(+). Its function is as follows. ATP-driven pump that supplies the Golgi apparatus with Ca(2+) and Mn(2+) ions, both essential cofactors for processing and trafficking of newly synthesized proteins in the secretory pathway. Within a catalytic cycle, acquires Ca(2+) or Mn(2+) ions on the cytoplasmic side of the membrane and delivers them to the lumenal side. The transfer of ions across the membrane is coupled to ATP hydrolysis and is associated with a transient phosphorylation that shifts the pump conformation from inward-facing to outward-facing state. Plays a primary role in the maintenance of Ca(2+) homeostasis in the trans-Golgi compartment with a functional impact on Golgi and post-Golgi protein sorting as well as a structural impact on cisternae morphology. Responsible for loading the Golgi stores with Ca(2+) ions in keratinocytes, contributing to keratinocyte differentiation and epidermis integrity. Participates in Ca(2+) and Mn(2+) ions uptake into the Golgi store of hippocampal neurons and regulates protein trafficking required for neural polarity. May also play a role in the maintenance of Ca(2+) and Mn(2+) homeostasis and signaling in the cytosol while preventing cytotoxicity. The polypeptide is Calcium-transporting ATPase type 2C member 1 (Homo sapiens (Human)).